The chain runs to 111 residues: Transcription and mRNA export factor SUS1 (111 aa).

It belongs to the ENY2 family. In terms of assembly, component of the nuclear pore complex (NPC)-associated TREX-2 complex (transcription and export complex 2), composed of at least SUS1, SAC3, THP1, SEM1, and CDC31. TREX-2 contains 2 SUS1 chains. The TREX-2 complex interacts with the nucleoporin NUP1. Component of the 1.8 MDa SAGA transcription coactivator-HAT complex. SAGA is built of 5 distinct domains with specialized functions. Within the SAGA complex, SUS1, SGF11, SGF73 and UBP8 form an additional subcomplex of SAGA called the DUB module (deubiquitination module). Interacts directly with THP1, SAC3, SGF11, and with the RNA polymerase II.

The protein localises to the nucleus. The protein resides in the nucleoplasm. It is found in the cytoplasm. It localises to the P-body. Involved in mRNA export coupled transcription activation by association with both the TREX-2 and the SAGA complexes. At the promoters, SAGA is required for recruitment of the basal transcription machinery. It influences RNA polymerase II transcriptional activity through different activities such as TBP interaction and promoter selectivity, interaction with transcription activators, and chromatin modification through histone acetylation and deubiquitination. Within the SAGA complex, participates in a subcomplex required for deubiquitination of H2B and for the maintenance of steady-state H3 methylation levels. The TREX-2 complex functions in docking export-competent ribonucleoprotein particles (mRNPs) to the nuclear entrance of the nuclear pore complex (nuclear basket). TREX-2 participates in mRNA export and accurate chromatin positioning in the nucleus by tethering genes to the nuclear periphery. May also be involved in cytoplasmic mRNA decay by interaction with components of P-bodies. This chain is Transcription and mRNA export factor SUS1, found in Lodderomyces elongisporus (strain ATCC 11503 / CBS 2605 / JCM 1781 / NBRC 1676 / NRRL YB-4239) (Yeast).